Consider the following 205-residue polypeptide: MADQSGNAAPPPVRRRSSANYRAYATEPHAKKKSKISASRKLQLKTLMLQIAKQELEREAVERRGEKGRALSTRCQPLELAGLGFEELQDLCRQLHARVDKVDEERYDVEAKVTKNITEIADLNQKIFDLRGKFKRPTLRRVRISADAMMQALLGTRAKETLDLRAHLKQVKKEDTEKENREVGDWRKNIDALSGMEGRKKKFEG.

Positions 1–38 (MADQSGNAAPPPVRRRSSANYRAYATEPHAKKKSKISA) are disordered. N-acetylalanine is present on Ala2. Position 5 is a phosphoserine (Ser5). Residues Ser17 and Ser18 each carry the phosphoserine; by PKA and PKD/PRKD1 modification. Tyr21 is subject to Phosphotyrosine. Phosphothreonine; by STK4/MST1 is present on Thr26. An involved in binding TNC region spans residues 27-74 (EPHAKKKSKISASRKLQLKTLMLQIAKQELEREAVERRGEKGRALSTR). Phosphoserine; by PKC/PRKCE occurs at positions 37 and 39. The residue at position 46 (Thr46) is a Phosphothreonine; by STK4/MST1. Ser72 is subject to Phosphoserine. Thr73 is subject to Phosphothreonine. Residues 124-145 (NQKIFDLRGKFKRPTLRRVRIS) form an involved in binding TNC and actin region. Thr138 carries the post-translational modification Phosphothreonine; by STK4/MST1. Ser145 is modified (phosphoserine; by PAK3). Thr176 is subject to Phosphothreonine. At Ser194 the chain carries Phosphoserine.

The protein belongs to the troponin I family. As to quaternary structure, binds to actin and tropomyosin. Interacts with TRIM63. Interacts with STK4/MST1. Post-translationally, phosphorylated at Ser-17 and Ser-18 by PRKD1; phosphorylation reduces myofilament calcium sensitivity. Phosphorylated preferentially at Thr-26. Phosphorylation by STK4/MST1 alters its binding affinity to TNNC1 (cardiac Tn-C) and TNNT2 (cardiac Tn-T). Phosphorylated at Ser-37 and Ser-39 by PRKCE; phosphorylation increases myocardium contractile dysfunction.

Its function is as follows. Troponin I is the inhibitory subunit of troponin, the thin filament regulatory complex which confers calcium-sensitivity to striated muscle actomyosin ATPase activity. This is Troponin I, cardiac muscle (TNNI3) from Equus caballus (Horse).